We begin with the raw amino-acid sequence, 115 residues long: T cell receptor beta variable 7-2 (115 aa).

Residues 1–21 (MGTRLLFWVAFCLLGADHTGA) form the signal peptide. Residues 22 to 115 (GVSQSPSNKV…SAVYLCASSL (94 aa)) enclose the Ig-like domain. The cysteines at positions 42 and 111 are disulfide-linked.

Alpha-beta TR is a heterodimer composed of an alpha and beta chain; disulfide-linked. The alpha-beta TR is associated with the transmembrane signaling CD3 coreceptor proteins to form the TR-CD3 (TcR or TCR). The assembly of alpha-beta TR heterodimers with CD3 occurs in the endoplasmic reticulum where a single alpha-beta TR heterodimer associates with one CD3D-CD3E heterodimer, one CD3G-CD3E heterodimer and one CD247 homodimer forming a stable octameric structure. CD3D-CD3E and CD3G-CD3E heterodimers preferentially associate with TR alpha and TR beta chains, respectively. The association of the CD247 homodimer is the last step of TcR assembly in the endoplasmic reticulum and is required for transport to the cell surface.

The protein localises to the cell membrane. Its function is as follows. V region of the variable domain of T cell receptor (TR) beta chain that participates in the antigen recognition. Alpha-beta T cell receptors are antigen specific receptors which are essential to the immune response and are present on the cell surface of T lymphocytes. Recognize peptide-major histocompatibility (MH) (pMH) complexes that are displayed by antigen presenting cells (APC), a prerequisite for efficient T cell adaptive immunity against pathogens. Binding of alpha-beta TR to pMH complex initiates TR-CD3 clustering on the cell surface and intracellular activation of LCK that phosphorylates the ITAM motifs of CD3G, CD3D, CD3E and CD247 enabling the recruitment of ZAP70. In turn ZAP70 phosphorylates LAT, which recruits numerous signaling molecules to form the LAT signalosome. The LAT signalosome propagates signal branching to three major signaling pathways, the calcium, the mitogen-activated protein kinase (MAPK) kinase and the nuclear factor NF-kappa-B (NF-kB) pathways, leading to the mobilization of transcription factors that are critical for gene expression and essential for T cell growth and differentiation. The T cell repertoire is generated in the thymus, by V-(D)-J rearrangement. This repertoire is then shaped by intrathymic selection events to generate a peripheral T cell pool of self-MH restricted, non-autoaggressive T cells. Post-thymic interaction of alpha-beta TR with the pMH complexes shapes TR structural and functional avidity. This is T cell receptor beta variable 7-2 from Homo sapiens (Human).